The following is a 416-amino-acid chain: Histidine--tRNA ligase (416 aa).

This sequence belongs to the class-II aminoacyl-tRNA synthetase family.

The protein localises to the cytoplasm. It catalyses the reaction tRNA(His) + L-histidine + ATP = L-histidyl-tRNA(His) + AMP + diphosphate + H(+). The sequence is that of Histidine--tRNA ligase from Methanococcus maripaludis (strain DSM 14266 / JCM 13030 / NBRC 101832 / S2 / LL).